The chain runs to 861 residues: Piwi-like protein 1 (861 aa).

Residues 1-13 (MTGRARARARGRA) show a composition bias toward basic residues. Residues 1–64 (MTGRARARAR…TAGGTAKSQG (64 aa)) are disordered. R14 bears the Omega-N-methylarginine; by PRMT5; alternate mark. R14 carries the post-translational modification Symmetric dimethylarginine; by PRMT5; alternate. The span at 17–27 (ETAQLVGSTAS) shows a compositional bias: polar residues. Position 49 is an omega-N-methylarginine; by PRMT5 (R49). Position 53 is an omega-N-methylarginine; alternate (R53). R53 is subject to Symmetric dimethylarginine; alternate. Positions 217-224 (RRLLKIMN) match the D-box motif. In terms of domain architecture, PAZ spans 278–391 (TVLDFMFNFY…LIPELCYLTG (114 aa)). The tract at residues 316 to 318 (TYR) is required for binding 2'-O-methylated 3'-end of piRNAs. R370 is modified (omega-N-methylarginine; by PRMT5). Residues 479–615 (SKETRGAPLI…LQMNCKMGGE (137 aa)) are MID region. A Piwi domain is found at 555–847 (IVVCLLSSNR…LAFLVGQSIH (293 aa)). Residues D632, E670, D702, and H836 contribute to the active site.

It belongs to the argonaute family. Piwi subfamily. Interacts (via Piwi domain) with DICER1, suggesting that it forms ribonucleoprotein RISC complexes; this interaction is regulated by HSP90AB1 activity. Interacts with MAEL, KIF17, PABPC1, PRMT5 and WDR77. Interacts (when methylated on arginine residues) with TDRD1, TDRKH/TDRD2, RNF17/TDRD4, TDRD6, TDRD7 and TDRD9. Interacts with CLOCK. Interacts with MOV10L1. Interacts with ANAPC10; interaction oly takes place following piRNA-binding. Interacts with RNF8; leading to sequester RNF8 in the cytoplasm. Interacts with TEX19. It depends on Mg(2+) as a cofactor. Post-translationally, arginine methylation by PRMT5 is required for the interaction with Tudor domain-containing protein (TDRD1, TDRKH/TDRD2, RNF17/TDRD4, TDRD6, TDRD7 and TDRD9) and subsequent localization to the meiotic nuage, also named P granule. In terms of processing, ubiquitinated by the anaphase promoting complex/cyclosome (APC/C) in late spermatids, leading to its degradation. Ubiquitination only takes place following piRNA-binding in adult testis. Ubiquitination and degradation in late spermatogenesis by APC/C is probably required to release RNF8 from the cytoplasm and promote histone to protamine exchange by RNF8. In terms of tissue distribution, expressed in spermatocytes and spermatids. Also detected in prostate cancer (at protein level). Detected in most fetal and adult tissues. Expressed in testes, specifically in germline cells; detected in spermatocytes and spermatids during spermatogenesis. Increased expression in testicular tumors originating from embryonic germ cells with retention of germ cells phenotype. No expression in testicular tumors of somatic origin, such as Sertoli cell and Leydig cell tumors. Overexpressed in gastric cancer cells. Isoform 3: Ubiquitously expressed, and specifically in CD34(+) hematopoietic progenitor cells but not in more differentiated cells.

The protein resides in the cytoplasm. Endoribonuclease that plays a central role in postnatal germ cells by repressing transposable elements and preventing their mobilization, which is essential for the germline integrity. Acts via the piRNA metabolic process, which mediates the repression of transposable elements during meiosis by forming complexes composed of piRNAs and Piwi proteins and governs the methylation and subsequent repression of transposons. Directly binds methylated piRNAs, a class of 24 to 30 nucleotide RNAs that are generated by a Dicer-independent mechanism and are primarily derived from transposons and other repeated sequence elements. Strongly prefers a uridine in the first position of their guide (g1U preference, also named 1U-bias). Not involved in the piRNA amplification loop, also named ping-pong amplification cycle. Acts as an endoribonuclease that cleaves transposon messenger RNAs. Besides their function in transposable elements repression, piRNAs are probably involved in other processes during meiosis such as translation regulation. Probable component of some RISC complex, which mediates RNA cleavage and translational silencing. Also plays a role in the formation of chromatoid bodies and is required for some miRNAs stability. Required to sequester RNF8 in the cytoplasm until late spermatogenesis; RNF8 being released upon ubiquitination and degradation of PIWIL1. In terms of biological role, may be a negative developmental regulator. The chain is Piwi-like protein 1 (PIWIL1) from Homo sapiens (Human).